We begin with the raw amino-acid sequence, 243 residues long: Precursor of CEP9 (243 aa).

Positions 1–26 are cleaved as a signal peptide; that stretch reads MKLLSITLTSIVISMVFYQTPITTEA. A propeptide spanning residues 28 to 44 is cleaved from the precursor; sequence SLRKTNDQDHFKAGFTD. 3 disordered regions span residues 42 to 63, 91 to 173, and 189 to 243; these read FTDD…KKGN, KTGS…VKGF, and NGQD…EPKA. Proline 48 carries the hydroxyproline; partial modification. Proline 51 is modified (hydroxyproline). The residue at position 55 (proline 55) is a Hydroxyproline; partial. A propeptide spanning residues 60 to 96 is cleaved from the precursor; that stretch reads KKGNVNVEGFQDDFKPTEGRKLLKTNVQDHFKTGSTD. Hydroxyproline is present on residues proline 100, proline 103, and proline 107. The propeptide occupies 112-148; the sequence is KKGNVNVESSEDDFKHKEGRKLQQTNGQNHFKTGSTD. Residues 133–147 show a composition bias toward polar residues; sequence LQQTNGQNHFKTGST. Hydroxyproline is present on residues proline 152, proline 155, and proline 159. The propeptide occupies 164-200; it reads KKGHANVKGFKDDFAPTEEIRLQKMNGQDHFKTGSTD. Hydroxyproline is present on residues proline 204, proline 207, and proline 211. The propeptide occupies 216–219; that stretch reads KKGD. 3 positions are modified to hydroxyproline: proline 223, proline 226, and proline 230. A propeptide spanning residues 235 to 243 is cleaved from the precursor; it reads AVKNDEPKA.

This sequence belongs to the C-terminally encoded plant signaling peptide (CEP) family. As to quaternary structure, interacts with CEP receptors (e.g. CEPR1 and CEPR2). Post-translationally, hydroxylated peptide is more active than non-hydroxylated peptide. In terms of processing, the mature small signaling peptide is generated by proteolytic processing of the longer precursor. Expressed in lateral root primordia and in lateral roots excluding the meristem region. Also present in the aerial tissues, such as leaf petioles and the shoot apex region.

The protein localises to the secreted. Its subcellular location is the extracellular space. It localises to the apoplast. Functionally, extracellular signaling peptide that represses primary root growth rate and significantly inhibits lateral root formation. Modulates leaf morphology. Regulates systemic nitrogen (N)-demand signaling. Mediates up-regulation of genes involved in N uptake and assimilation pathways. The chain is Precursor of CEP9 from Arabidopsis thaliana (Mouse-ear cress).